The following is a 290-amino-acid chain: Small ribosomal subunit biogenesis GTPase RsgA (290 aa).

Residues 62–219 form the CP-type G domain; the sequence is DNYLIRPQVA…VVDTPGFSTL (158 aa). Residues 111-114 and 162-170 contribute to the GTP site; these read NKID and GPSGVGKST. Zn(2+) is bound by residues cysteine 243, cysteine 248, histidine 250, and cysteine 256.

This sequence belongs to the TRAFAC class YlqF/YawG GTPase family. RsgA subfamily. As to quaternary structure, monomer. Associates with 30S ribosomal subunit, binds 16S rRNA. Zn(2+) is required as a cofactor.

Its subcellular location is the cytoplasm. One of several proteins that assist in the late maturation steps of the functional core of the 30S ribosomal subunit. Helps release RbfA from mature subunits. May play a role in the assembly of ribosomal proteins into the subunit. Circularly permuted GTPase that catalyzes slow GTP hydrolysis, GTPase activity is stimulated by the 30S ribosomal subunit. The chain is Small ribosomal subunit biogenesis GTPase RsgA from Clostridium novyi (strain NT).